The primary structure comprises 339 residues: MKPDLPPRIAVLLVNLGTPDEPTAPAVRRYLKQFLSDPRVIEIPKFLWAIILNLFVLPSRPKRVAEAYASIWDGDSPMRNILNAQVEMLDKRLADRAAPFRVSVHAAMSYGNPGLPDVMDQLRSEGVDHFVMLPVFPQYSATSTGAVYDAITKWSLKQRNLPNITIVKDYFAHPLYIKALADSIRRFQAVHGKPEKLMFSFHGIPQPYADKGDPYPKRCKCTAAQVAHELGLKPDEWIISFQSRFGKQEWIKPYTDVVLKEWGSSGVRSVQILSPAFSADCLETLEELAIENRETFLHAGGQEYHYIPALNADEAHIDLLEAMSAPLVKGWAGTLDGWA.

2 residues coordinate Fe cation: His-202 and Glu-283.

This sequence belongs to the ferrochelatase family.

The protein resides in the cytoplasm. The enzyme catalyses heme b + 2 H(+) = protoporphyrin IX + Fe(2+). The protein operates within porphyrin-containing compound metabolism; protoheme biosynthesis; protoheme from protoporphyrin-IX: step 1/1. Its function is as follows. Catalyzes the ferrous insertion into protoporphyrin IX. In Psychrobacter cryohalolentis (strain ATCC BAA-1226 / DSM 17306 / VKM B-2378 / K5), this protein is Ferrochelatase.